A 101-amino-acid polypeptide reads, in one-letter code: Small ribosomal subunit protein uS14 (101 aa).

This sequence belongs to the universal ribosomal protein uS14 family. As to quaternary structure, part of the 30S ribosomal subunit. Contacts proteins S3 and S10.

In terms of biological role, binds 16S rRNA, required for the assembly of 30S particles and may also be responsible for determining the conformation of the 16S rRNA at the A site. The chain is Small ribosomal subunit protein uS14 from Paracoccus denitrificans (strain Pd 1222).